Consider the following 182-residue polypeptide: MKTIIAAIFLGILMHAFAKECTLMAAASNFNSDKYFDVPHVYVTHSKNGPKEKVCREYNTTKNSDKTTSTTVVTLKTGGTQSIVLSCNNSPKSGVKGQYFMDCQVPGGTGGINIQLESSIIATDNKNYALVHFCPITGRGVTEDIVVLQTNKDNVDPGVTSAIKNYGWSLENWKSRKDAGCQ.

Positions 1 to 18 (MKTIIAAIFLGILMHAFA) are cleaved as a signal peptide. 3 cysteine pairs are disulfide-bonded: cysteine 21/cysteine 134, cysteine 55/cysteine 181, and cysteine 87/cysteine 103.

The protein belongs to the calycin superfamily. Triabin family. Expressed in salivary glands.

It localises to the secreted. Inhibits platelet aggregation, vasoconstriction, and angiogenesis through binding to distinct eicosanoids involved in inflammation (acts as a scavenger), and has a role in inhibiting host innate immunity by impairing platelet-assisted formation of neutrophil extracellular traps (NETs). Inhibits platelet aggregation by collagen (IC(50)=30 nM), thromboxane A2 mimetic (TXA2 mimetic), or arachidonic acid (AA) without affecting aggregation induced by ADP, convulxin (GP6 agonist), PMA, and ristocetin (vWF-dependent platelet agglutinator). Binds with high affinity to TXA2, TXB2, prostaglandine H2 mimetic (PGH2 mimetic), PGD2, PGJ2, and PGF2alpha. Also interacts with 15(S)-hydroxyeicosatetraenoic acid (HETE), being the first calycin/lipocalin described to date to bind to a derivative of 15-lipoxygenase. Binding is not observed to other prostaglandins, leukotrienes, HETEs, lipids, and biogenic amines. It prevents contraction of rat uterus stimulated by PGF2alpha and induces relaxation of aorta previously contracted with TXA2 mimetic. In addition, it inhibits angiogenesis mediated by 15(S)-HETE and does not enhance inhibition of collagen-induced platelet aggregation by SQ29548 (TXA2 antagonist) and indomethacin. Also impairs platelet-assisted formation of neutrophil extracellular traps (NETs). NETs are web-like structures of DNA and proteins that play an important role in killing of pathogens. In addition, NETs are implicated in thrombus formation. In vivo, this protein exhibits antithrombotic activity in two distinct mice models that are highly dependent on platelets. It is noteworthy that it inhibits thrombosis without promoting excessive bleeding. The chain is Dipetalodipin from Dipetalogaster maximus (Blood-sucking bug).